Reading from the N-terminus, the 548-residue chain is Lysine--tRNA ligase (548 aa).

Positions 43–51 (PSGVPHLGN) match the 'HIGH' region motif. A 'KMSKS' region motif is present at residues 308–312 (PFSSS).

The protein belongs to the class-I aminoacyl-tRNA synthetase family.

It is found in the cytoplasm. It catalyses the reaction tRNA(Lys) + L-lysine + ATP = L-lysyl-tRNA(Lys) + AMP + diphosphate. The protein is Lysine--tRNA ligase of Halobacterium salinarum (strain ATCC 700922 / JCM 11081 / NRC-1) (Halobacterium halobium).